The primary structure comprises 207 residues: Dephospho-CoA kinase (207 aa).

In terms of domain architecture, DPCK spans 10 to 207 (ILGLTGGIGS…FYLTLKGGQP (198 aa)). 18 to 23 (GSGKSA) contributes to the ATP binding site.

The protein belongs to the CoaE family.

Its subcellular location is the cytoplasm. The enzyme catalyses 3'-dephospho-CoA + ATP = ADP + CoA + H(+). It functions in the pathway cofactor biosynthesis; coenzyme A biosynthesis; CoA from (R)-pantothenate: step 5/5. Its function is as follows. Catalyzes the phosphorylation of the 3'-hydroxyl group of dephosphocoenzyme A to form coenzyme A. In Pseudomonas putida (strain ATCC 47054 / DSM 6125 / CFBP 8728 / NCIMB 11950 / KT2440), this protein is Dephospho-CoA kinase.